Reading from the N-terminus, the 135-residue chain is Transcription antitermination protein NusB (135 aa).

This sequence belongs to the NusB family.

In terms of biological role, involved in transcription antitermination. Required for transcription of ribosomal RNA (rRNA) genes. Binds specifically to the boxA antiterminator sequence of the ribosomal RNA (rrn) operons. This is Transcription antitermination protein NusB from Lacticaseibacillus paracasei (strain ATCC 334 / BCRC 17002 / CCUG 31169 / CIP 107868 / KCTC 3260 / NRRL B-441) (Lactobacillus paracasei).